A 207-amino-acid chain; its full sequence is Serotonin N-acetyltransferase (207 aa).

The segment at 1-28 (MSMQSTHPPKPEAPRLPPGIPESPSCQR) is disordered. The residue at position 31 (Thr-31) is a Phosphothreonine; by PKA. An N-acetyltransferase domain is found at 35-202 (SEFRCLTPED…CSLRDHPFLR (168 aa)). Leu-124 is a binding site for substrate. Acetyl-CoA is bound by residues 124 to 126 (LAV) and 132 to 137 (QQGRGP). Residue Met-159 participates in substrate binding. 168–170 (YER) provides a ligand contact to acetyl-CoA. Position 205 is a phosphoserine (Ser-205).

This sequence belongs to the acetyltransferase family. AANAT subfamily. As to quaternary structure, monomer. Interacts with several 14-3-3 proteins, including YWHAB, YWHAE, YWHAG and YWHAZ, preferentially when phosphorylated at Thr-31. Phosphorylation on Ser-205 also allows binding to YWHAZ, but with lower affinity. The interaction with YWHAZ considerably increases affinity for arylalkylamines and acetyl-CoA and protects the enzyme from dephosphorylation and proteasomal degradation. It may also prevent thiol-dependent inactivation. In terms of processing, cAMP-dependent phosphorylation on both N-terminal Thr-31 and C-terminal Ser-205 regulates AANAT activity by promoting interaction with 14-3-3 proteins.

The protein resides in the cytoplasm. It carries out the reaction a 2-arylethylamine + acetyl-CoA = an N-acetyl-2-arylethylamine + CoA + H(+). It participates in aromatic compound metabolism; melatonin biosynthesis; melatonin from serotonin: step 1/2. Controls the night/day rhythm of melatonin production in the pineal gland. Catalyzes the N-acetylation of serotonin into N-acetylserotonin, the penultimate step in the synthesis of melatonin. The chain is Serotonin N-acetyltransferase (AANAT) from Pan troglodytes (Chimpanzee).